A 283-amino-acid chain; its full sequence is Protein/nucleic acid deglycase HchA (283 aa).

Residues His86, Glu91, and His123 each contribute to the Zn(2+) site. Catalysis depends on Cys185, which acts as the Nucleophile.

Belongs to the peptidase C56 family. HchA subfamily. Homodimer.

The protein resides in the cytoplasm. The catalysed reaction is N(omega)-(1-hydroxy-2-oxopropyl)-L-arginyl-[protein] + H2O = lactate + L-arginyl-[protein] + H(+). The enzyme catalyses N(6)-(1-hydroxy-2-oxopropyl)-L-lysyl-[protein] + H2O = lactate + L-lysyl-[protein] + H(+). It carries out the reaction S-(1-hydroxy-2-oxopropyl)-L-cysteinyl-[protein] + H2O = lactate + L-cysteinyl-[protein] + H(+). It catalyses the reaction N(omega)-(1-hydroxy-2-oxoethyl)-L-arginyl-[protein] + H2O = L-arginyl-[protein] + glycolate + H(+). The catalysed reaction is N(6)-(1-hydroxy-2-oxoethyl)-L-lysyl-[protein] + H2O = glycolate + L-lysyl-[protein] + H(+). The enzyme catalyses S-(1-hydroxy-2-oxoethyl)-L-cysteinyl-[protein] + H2O = glycolate + L-cysteinyl-[protein] + H(+). It carries out the reaction N(2)-(1-hydroxy-2-oxopropyl)-dGTP + H2O = lactate + dGTP + H(+). It catalyses the reaction N(2)-(1-hydroxy-2-oxopropyl)-GTP + H2O = lactate + GTP + H(+). The catalysed reaction is N(2)-(1-hydroxy-2-oxopropyl)-GDP + H2O = lactate + GDP + H(+). The enzyme catalyses N(2)-(1-hydroxy-2-oxopropyl)-GMP + H2O = lactate + GMP + H(+). It carries out the reaction N(2)-(1-hydroxy-2-oxoethyl)-dGTP + H2O = dGTP + glycolate + H(+). It catalyses the reaction N(2)-(1-hydroxy-2-oxoethyl)-GTP + H2O = glycolate + GTP + H(+). The catalysed reaction is N(2)-(1-hydroxy-2-oxoethyl)-GDP + H2O = glycolate + GDP + H(+). The enzyme catalyses N(2)-(1-hydroxy-2-oxoethyl)-GMP + H2O = glycolate + GMP + H(+). It carries out the reaction an N(2)-(1-hydroxy-2-oxopropyl)-guanosine in RNA + H2O = a guanosine in RNA + lactate + H(+). It catalyses the reaction an N(2)-(1-hydroxy-2-oxopropyl)-2'-deoxyguanosine in DNA + H2O = a 2'-deoxyguanosine in DNA + lactate + H(+). The catalysed reaction is an N(2)-(1-hydroxy-2-oxoethyl)-guanosine in RNA + H2O = a guanosine in RNA + glycolate + H(+). The enzyme catalyses an N(2)-(1-hydroxy-2-oxoethyl)-2'-deoxyguanosine in DNA + H2O = a 2'-deoxyguanosine in DNA + glycolate + H(+). In terms of biological role, protein and nucleotide deglycase that catalyzes the deglycation of the Maillard adducts formed between amino groups of proteins or nucleotides and reactive carbonyl groups of glyoxals. Thus, functions as a protein deglycase that repairs methylglyoxal- and glyoxal-glycated proteins, and releases repaired proteins and lactate or glycolate, respectively. Deglycates cysteine, arginine and lysine residues in proteins, and thus reactivates these proteins by reversing glycation by glyoxals. Acts on early glycation intermediates (hemithioacetals and aminocarbinols), preventing the formation of Schiff bases and advanced glycation endproducts (AGE). Also functions as a nucleotide deglycase able to repair glycated guanine in the free nucleotide pool (GTP, GDP, GMP, dGTP) and in DNA and RNA. Is thus involved in a major nucleotide repair system named guanine glycation repair (GG repair), dedicated to reversing methylglyoxal and glyoxal damage via nucleotide sanitization and direct nucleic acid repair. Plays an important role in protecting cells from carbonyl stress. This is Protein/nucleic acid deglycase HchA from Escherichia coli O7:K1 (strain IAI39 / ExPEC).